The primary structure comprises 212 residues: uncharacterized protein (212 aa).

S-adenosyl-L-methionine-binding residues include G53, E74, and D97.

The protein belongs to the methyltransferase superfamily. YrrT family.

Functionally, could be a S-adenosyl-L-methionine-dependent methyltransferase. This is an uncharacterized protein from Bacillus cereus (strain ATCC 14579 / DSM 31 / CCUG 7414 / JCM 2152 / NBRC 15305 / NCIMB 9373 / NCTC 2599 / NRRL B-3711).